The chain runs to 1266 residues: TBC1 domain family member 9 (1266 aa).

GRAM domains lie at 146 to 213 (VKFH…EKNA) and 293 to 361 (ERYR…EKAD). The disordered stretch occupies residues 415–456 (SYNSSDDEVYSRPSSLVSSSPQRSTSSDADGERQFNLNGNSV). Residues 425 to 441 (SRPSSLVSSSPQRSTSS) show a composition bias toward low complexity. Residues 515-702 (GIPESMRGEL…VVVDCFFYEG (188 aa)) enclose the Rab-GAP TBC domain. In terms of domain architecture, EF-hand spans 886-921 (HSDVLASRLFQLLDENGDSLINFREFVSGLSAACHG). Disordered regions lie at residues 1075-1095 (AKEGGSGGSGPSCHQGIPGVL) and 1132-1164 (DIKLEDSSPRDNGACSSMLISDDDTKDDSSMSS).

Its function is as follows. May act as a GTPase-activating protein for Rab family protein(s). This is TBC1 domain family member 9 (TBC1D9) from Homo sapiens (Human).